A 345-amino-acid chain; its full sequence is MSVKIFNGEFDIPENSRSLYILVIATTDISLIPGLTVAGATPELTHFTPAADAEFLIKGKCSVINTVPVTPNGIPTPAIITRASLEFVKIPRLVVNAGSRIKPNLPLIDLGGEPGGDIRKGSLRKEVAERILNNGVSLGEEFSNSFDFLIIGESIPAGTTTAMAVLVGLGYDALDKVSSASPENPKELKKKIVYEAIKDLPSDLMGKLAKLSDPMLLGVSGIALGFKGKILLAGGTQMTAAAAIIKEFNKNKLKDIAIGTTKWIINDRSSDIIGLAKAVGIPILAAWLDFTNSKFEGLKVYEKGFVKEGVGAGGASIYAMKRGVTNEQILGKVEEIYQRITTNLM.

It belongs to the UPF0284 family.

In Sulfurisphaera tokodaii (strain DSM 16993 / JCM 10545 / NBRC 100140 / 7) (Sulfolobus tokodaii), this protein is UPF0284 protein STK_21430.